We begin with the raw amino-acid sequence, 291 residues long: Proteasome subunit beta (291 aa).

Residues methionine 1–glycine 57 constitute a propeptide, removed in mature form; by autocatalysis. The active-site Nucleophile is threonine 58.

It belongs to the peptidase T1B family. In terms of assembly, the 20S proteasome core is composed of 14 alpha and 14 beta subunits that assemble into four stacked heptameric rings, resulting in a barrel-shaped structure. The two inner rings, each composed of seven catalytic beta subunits, are sandwiched by two outer rings, each composed of seven alpha subunits. The catalytic chamber with the active sites is on the inside of the barrel. Has a gated structure, the ends of the cylinder being occluded by the N-termini of the alpha-subunits. Is capped by the proteasome-associated ATPase, ARC.

The protein localises to the cytoplasm. It catalyses the reaction Cleavage of peptide bonds with very broad specificity.. The protein operates within protein degradation; proteasomal Pup-dependent pathway. The formation of the proteasomal ATPase ARC-20S proteasome complex, likely via the docking of the C-termini of ARC into the intersubunit pockets in the alpha-rings, may trigger opening of the gate for substrate entry. Interconversion between the open-gate and close-gate conformations leads to a dynamic regulation of the 20S proteasome proteolysis activity. In terms of biological role, component of the proteasome core, a large protease complex with broad specificity involved in protein degradation. In Mycobacterium tuberculosis (strain ATCC 25177 / H37Ra), this protein is Proteasome subunit beta.